Here is a 447-residue protein sequence, read N- to C-terminus: Phosphoglucosamine mutase (447 aa).

Serine 100 serves as the catalytic Phosphoserine intermediate. Residues serine 100, aspartate 239, aspartate 241, and aspartate 243 each contribute to the Mg(2+) site. Phosphoserine is present on serine 100.

Belongs to the phosphohexose mutase family. Mg(2+) is required as a cofactor. Activated by phosphorylation.

The catalysed reaction is alpha-D-glucosamine 1-phosphate = D-glucosamine 6-phosphate. Catalyzes the conversion of glucosamine-6-phosphate to glucosamine-1-phosphate. The sequence is that of Phosphoglucosamine mutase from Thermoanaerobacter pseudethanolicus (strain ATCC 33223 / 39E) (Clostridium thermohydrosulfuricum).